Reading from the N-terminus, the 715-residue chain is Phosphoribosylformylglycinamidine synthase subunit PurL (715 aa).

His33 is an active-site residue. Tyr36 provides a ligand contact to ATP. Position 77 (Glu77) interacts with Mg(2+). Substrate-binding positions include 78–81 and Arg100; that span reads SHNH. Catalysis depends on His79, which acts as the Proton acceptor. Asp101 is a Mg(2+) binding site. Gln225 contributes to the substrate binding site. Residue Asp253 participates in Mg(2+) binding. 297–299 serves as a coordination point for substrate; that stretch reads ESQ. Positions 476 and 513 each coordinate ATP. Residue Asn514 participates in Mg(2+) binding. Ser516 contacts substrate.

Belongs to the FGAMS family. As to quaternary structure, monomer. Part of the FGAM synthase complex composed of 1 PurL, 1 PurQ and 2 PurS subunits.

Its subcellular location is the cytoplasm. It carries out the reaction N(2)-formyl-N(1)-(5-phospho-beta-D-ribosyl)glycinamide + L-glutamine + ATP + H2O = 2-formamido-N(1)-(5-O-phospho-beta-D-ribosyl)acetamidine + L-glutamate + ADP + phosphate + H(+). It participates in purine metabolism; IMP biosynthesis via de novo pathway; 5-amino-1-(5-phospho-D-ribosyl)imidazole from N(2)-formyl-N(1)-(5-phospho-D-ribosyl)glycinamide: step 1/2. Its function is as follows. Part of the phosphoribosylformylglycinamidine synthase complex involved in the purines biosynthetic pathway. Catalyzes the ATP-dependent conversion of formylglycinamide ribonucleotide (FGAR) and glutamine to yield formylglycinamidine ribonucleotide (FGAM) and glutamate. The FGAM synthase complex is composed of three subunits. PurQ produces an ammonia molecule by converting glutamine to glutamate. PurL transfers the ammonia molecule to FGAR to form FGAM in an ATP-dependent manner. PurS interacts with PurQ and PurL and is thought to assist in the transfer of the ammonia molecule from PurQ to PurL. This Methanosarcina barkeri (strain Fusaro / DSM 804) protein is Phosphoribosylformylglycinamidine synthase subunit PurL.